Reading from the N-terminus, the 336-residue chain is Dihydroorotate dehydrogenase (quinone) (336 aa).

FMN contacts are provided by residues 62–66 (AGLDK) and Thr-86. Residue Lys-66 participates in substrate binding. Substrate is bound at residue 111-115 (NRMGF). Asn-139 and Asn-172 together coordinate FMN. A substrate-binding site is contributed by Asn-172. Ser-175 (nucleophile) is an active-site residue. A substrate-binding site is contributed by Asn-177. Lys-217 and Thr-245 together coordinate FMN. 246-247 (NT) contributes to the substrate binding site. Residues Gly-268, Gly-297, and 318–319 (YS) each bind FMN.

The protein belongs to the dihydroorotate dehydrogenase family. Type 2 subfamily. As to quaternary structure, monomer. The cofactor is FMN.

It localises to the cell membrane. The enzyme catalyses (S)-dihydroorotate + a quinone = orotate + a quinol. The protein operates within pyrimidine metabolism; UMP biosynthesis via de novo pathway; orotate from (S)-dihydroorotate (quinone route): step 1/1. In terms of biological role, catalyzes the conversion of dihydroorotate to orotate with quinone as electron acceptor. The protein is Dihydroorotate dehydrogenase (quinone) of Yersinia pseudotuberculosis serotype O:1b (strain IP 31758).